Here is a 111-residue protein sequence, read N- to C-terminus: Aquaporin-2 (111 aa).

Topologically, residues 1-6 are cytoplasmic; that stretch reads SIAFSR. The chain crosses the membrane as a helical span at residues 7 to 27; sequence AVFSEFLATLLFVFFGLGSAL. The Extracellular portion of the chain corresponds to 28–37; the sequence is NWPSTVPIPT. Residues 38–56 form a helical membrane-spanning segment; the sequence is VLQISMAFGLAIGTLVQTL. Over 57 to 61 the chain is Cytoplasmic; that stretch reads GHISG. The segment at residues 62 to 71 is an intramembrane region (discontinuously helical); the sequence is AHINPAVTVA. Positions 65 to 67 match the NPA 1 motif; it reads NPA. At 72 to 82 the chain is on the cytoplasmic side; it reads CLVGCHVSFLR. The chain crosses the membrane as a helical span at residues 83 to 104; it reads ATFYVAAQLLGAVAGAALLHKL. Residues 105 to 111 lie on the Extracellular side of the membrane; that stretch reads TPEDIRG.

It belongs to the MIP/aquaporin (TC 1.A.8) family. In terms of assembly, homotetramer. In terms of processing, serine phosphorylation is necessary and sufficient for expression at the apical membrane. Endocytosis is not phosphorylation-dependent. N-glycosylated.

The protein localises to the apical cell membrane. Its subcellular location is the basolateral cell membrane. It is found in the cell membrane. It localises to the cytoplasmic vesicle membrane. The protein resides in the golgi apparatus. The protein localises to the trans-Golgi network membrane. It carries out the reaction H2O(in) = H2O(out). The enzyme catalyses glycerol(in) = glycerol(out). Forms a water-specific channel that provides the plasma membranes of renal collecting duct with high permeability to water, thereby permitting water to move in the direction of an osmotic gradient. Plays an essential role in renal water homeostasis. Could also be permeable to glycerol. This is Aquaporin-2 from Macroscelides proboscideus (Short-eared elephant shrew).